The primary structure comprises 178 residues: Large ribosomal subunit protein uL5 (178 aa).

This sequence belongs to the universal ribosomal protein uL5 family. In terms of assembly, part of the 50S ribosomal subunit; part of the 5S rRNA/L5/L18/L25 subcomplex. Contacts the 5S rRNA and the P site tRNA. Forms a bridge to the 30S subunit in the 70S ribosome.

Its function is as follows. This is one of the proteins that bind and probably mediate the attachment of the 5S RNA into the large ribosomal subunit, where it forms part of the central protuberance. In the 70S ribosome it contacts protein S13 of the 30S subunit (bridge B1b), connecting the 2 subunits; this bridge is implicated in subunit movement. Contacts the P site tRNA; the 5S rRNA and some of its associated proteins might help stabilize positioning of ribosome-bound tRNAs. This is Large ribosomal subunit protein uL5 from Acinetobacter baumannii (strain AB0057).